The chain runs to 251 residues: Triosephosphate isomerase (251 aa).

9-11 (NWK) serves as a coordination point for substrate. His-94 functions as the Electrophile in the catalytic mechanism. Residue Glu-163 is the Proton acceptor of the active site. Substrate is bound by residues Gly-169, Ser-209, and 230–231 (GG).

This sequence belongs to the triosephosphate isomerase family. In terms of assembly, homodimer.

It is found in the cytoplasm. The catalysed reaction is D-glyceraldehyde 3-phosphate = dihydroxyacetone phosphate. Its pathway is carbohydrate biosynthesis; gluconeogenesis. The protein operates within carbohydrate degradation; glycolysis; D-glyceraldehyde 3-phosphate from glycerone phosphate: step 1/1. Its function is as follows. Involved in the gluconeogenesis. Catalyzes stereospecifically the conversion of dihydroxyacetone phosphate (DHAP) to D-glyceraldehyde-3-phosphate (G3P). This chain is Triosephosphate isomerase, found in Dehalococcoides mccartyi (strain ATCC BAA-2266 / KCTC 15142 / 195) (Dehalococcoides ethenogenes (strain 195)).